We begin with the raw amino-acid sequence, 1261 residues long: Structural maintenance of chromosomes protein 3 (1261 aa).

Coiled-coil stretches lie at residues 188–332 (EKIQ…HSLQ) and 406–450 (LIAD…YEMD). Positions 534–645 (NGYYGTVIEL…IIVRTLDQAA (112 aa)) constitute an SMC hinge domain. Coiled-coil stretches lie at residues 677–826 (KRSK…MDLM), 857–930 (NERR…DKIT), and 1023–1085 (RELE…ENRK). The DA-box signature appears at 1159–1193 (LSGGQKSLVALAIIFSIQKCDPAPFYLFDEIDAAL).

It belongs to the SMC family. SMC3 subfamily. In terms of assembly, component of the cohesin complex, composed of the smc-1 and smc-3 heterodimer attached via their SMC hinge domain, scc-1 which links them, and scc-3. Interacts with scc-1, smc-1 and tim-1.

Its subcellular location is the nucleus. The protein resides in the chromosome. Involved in chromosome cohesion during cell cycle and in DNA repair. Involved in the repair of double strand breaks during mitosis and meiosis. Required for chromosome segregation during mitosis. Central component of cohesin complex. The cohesin complex is required for the cohesion of sister chromatids after DNA replication. The cohesin complex apparently forms a large proteinaceous ring within which sister chromatids can be trapped. At anaphase, the complex is cleaved and dissociates from chromatin, allowing sister chromatids to segregate. Required for the localization of lab-1 to meiotic and mitotic chromosomes. The chain is Structural maintenance of chromosomes protein 3 from Caenorhabditis elegans.